The primary structure comprises 708 residues: Leukotoxin translocation ATP-binding protein LktB (708 aa).

In terms of domain architecture, Peptidase C39 spans 1-126 (MEANHQRNDL…ACYQGQLILV (126 aa)). An ABC transmembrane type-1 domain is found at 155-437 (FLETLIVSIF…LAQLWQDFQQ (283 aa)). 5 consecutive transmembrane segments (helical) span residues 159 to 179 (LIVS…FQVV), 192 to 212 (LNII…LSGL), 270 to 290 (ALTS…MWYY), 296 to 316 (LVIL…SPIL), and 389 to 409 (VMVI…LSIG). The ABC transporter domain maps to 469-704 (ISFKNIRFRY…SNGLYSYLHQ (236 aa)). 503–510 (GRSGSGKS) is a binding site for ATP.

Belongs to the ABC transporter superfamily. Protein-1 exporter (TC 3.A.1.109) family. Homodimer.

The protein resides in the cell inner membrane. It catalyses the reaction ATP + H2O + proteinSide 1 = ADP + phosphate + proteinSide 2.. Part of the ABC transporter complex LktBD involved in leukotoxin export. Transmembrane domains (TMD) form a pore in the inner membrane and the ATP-binding domain (NBD) is responsible for energy generation. The sequence is that of Leukotoxin translocation ATP-binding protein LktB (lktB) from Mannheimia haemolytica (Pasteurella haemolytica).